Consider the following 176-residue polypeptide: ATP-dependent protease subunit HslV (176 aa).

Thr2 is an active-site residue. Na(+) is bound by residues Ser157, Cys160, and Thr163.

Belongs to the peptidase T1B family. HslV subfamily. In terms of assembly, a double ring-shaped homohexamer of HslV is capped on each side by a ring-shaped HslU homohexamer. The assembly of the HslU/HslV complex is dependent on binding of ATP.

The protein localises to the cytoplasm. The enzyme catalyses ATP-dependent cleavage of peptide bonds with broad specificity.. Allosterically activated by HslU binding. Functionally, protease subunit of a proteasome-like degradation complex believed to be a general protein degrading machinery. The sequence is that of ATP-dependent protease subunit HslV from Buchnera aphidicola subsp. Baizongia pistaciae (strain Bp).